The sequence spans 166 residues: Phosphopantetheine adenylyltransferase (166 aa).

Position 11 (Ser11) interacts with substrate. ATP is bound by residues Ser11–Phe12 and His19. Lys43, Ala76, and Arg90 together coordinate substrate. ATP contacts are provided by residues Gly91–Arg93, Glu101, and Leu126–Ser132.

This sequence belongs to the bacterial CoaD family. In terms of assembly, homohexamer. The cofactor is Mg(2+).

It localises to the cytoplasm. It carries out the reaction (R)-4'-phosphopantetheine + ATP + H(+) = 3'-dephospho-CoA + diphosphate. It functions in the pathway cofactor biosynthesis; coenzyme A biosynthesis; CoA from (R)-pantothenate: step 4/5. In terms of biological role, reversibly transfers an adenylyl group from ATP to 4'-phosphopantetheine, yielding dephospho-CoA (dPCoA) and pyrophosphate. In Streptococcus equi subsp. zooepidemicus (strain MGCS10565), this protein is Phosphopantetheine adenylyltransferase.